The primary structure comprises 337 residues: Glyceraldehyde-3-phosphate dehydrogenase 1, cytosolic (337 aa).

Residues 13 to 14 (RI), Asp35, and Arg82 contribute to the NAD(+) site. Residues 153 to 155 (SCT), Thr184, 213 to 214 (TG), and Arg236 each bind D-glyceraldehyde 3-phosphate. The active-site Nucleophile is Cys154. Asn318 lines the NAD(+) pocket.

The protein belongs to the glyceraldehyde-3-phosphate dehydrogenase family. Homotetramer.

It is found in the cytoplasm. It catalyses the reaction D-glyceraldehyde 3-phosphate + phosphate + NAD(+) = (2R)-3-phospho-glyceroyl phosphate + NADH + H(+). Its pathway is carbohydrate degradation; glycolysis; pyruvate from D-glyceraldehyde 3-phosphate: step 1/5. Its function is as follows. Key enzyme in glycolysis that catalyzes the first step of the pathway by converting D-glyceraldehyde 3-phosphate (G3P) into 3-phospho-D-glyceroyl phosphate. Essential for the maintenance of cellular ATP levels and carbohydrate metabolism. In Hordeum vulgare (Barley), this protein is Glyceraldehyde-3-phosphate dehydrogenase 1, cytosolic (GAPC).